We begin with the raw amino-acid sequence, 486 residues long: High-affinity iron permease fer2 (486 aa).

The next 2 membrane-spanning stretches (helical) occupy residues 76–96 (IVLL…AAFL) and 113–133 (LWEG…SLAI). Asn-174 carries an N-linked (GlcNAc...) asparagine glycan. Residues 175–209 (HSDDSASASSSSARQAAEEEAGTKTTRTEKLNPLE) are disordered. Positions 179-189 (SASASSSSARQ) are enriched in low complexity. 3 helical membrane-spanning segments follow: residues 252-272 (ALFT…VVFI), 283-303 (SIPL…FLIF), and 308-328 (LVSV…IASG). Residue Asn-393 is glycosylated (N-linked (GlcNAc...) asparagine). The chain crosses the membrane as a helical span at residues 400–420 (SVFMYIGYWFAVAGYLWYQIW). An N-linked (GlcNAc...) asparagine glycan is attached at Asn-438. The segment at 441-486 (IQARQRKQEKAHQRQLREADQEEHGHSSNSDKQQHPSEAGPSTLSH) is disordered. Positions 446–466 (RKQEKAHQRQLREADQEEHGH) are enriched in basic and acidic residues.

The protein belongs to the oxidase-dependent Fe transporter (OFeT) (TC 9.A.10.1) family.

Its subcellular location is the cell membrane. Its function is as follows. Permease for high affinity iron uptake. The sequence is that of High-affinity iron permease fer2 from Mycosarcoma maydis (Corn smut fungus).